A 262-amino-acid polypeptide reads, in one-letter code: Putative hydroxypyruvate isomerase (262 aa).

Catalysis depends on proton donor/acceptor residues Glu-146 and Glu-244.

The protein belongs to the hyi family.

It carries out the reaction 3-hydroxypyruvate = 2-hydroxy-3-oxopropanoate. Catalyzes the reversible isomerization between hydroxypyruvate and 2-hydroxy-3-oxopropanoate (also termed tartronate semialdehyde). This chain is Putative hydroxypyruvate isomerase, found in Caenorhabditis elegans.